The primary structure comprises 889 residues: Oxysterol-binding protein-related protein 8 (889 aa).

Methionine 1 carries the N-acetylmethionine modification. The interval 1–129 (MEAALADGEP…SLKVQKKNYR (129 aa)) is disordered. Residues serine 14, serine 65, and serine 68 each carry the phosphoserine modification. Residues 62-71 (PSLSPASLHS) show a composition bias toward polar residues. 3 stretches are compositionally biased toward basic and acidic residues: residues 73-88 (GFERGKEDISQNKDDS), 95-109 (SKSESKLYNGSEKDS), and 116-129 (TKKESLKVQKKNYR). Residues 148–265 (VIVMADWLKI…WMDALELALK (118 aa)) form the PH domain. A phosphoserine mark is found at serine 314, serine 328, and serine 342. Positions 321–336 (FKDQDLYSDKSDKEND) are enriched in basic and acidic residues. Residues 321–374 (FKDQDLYSDKSDKENDPEHDESDNEVLGKSEESDTDTSERQDDSYIDPEPVEPL) are disordered. Residues 346 to 363 (VLGKSEESDTDTSERQDD) are compositionally biased toward basic and acidic residues. Residues 420–425 (LSRVVL), 482–485 (KPYN), and 514–515 (HH) contribute to the a 1,2-diacyl-sn-glycero-3-phospho-(1D-myo-inositol 4-phosphate) site. A 1,2-diacyl-sn-glycero-3-phospho-L-serine-binding positions include 420 to 425 (LSRVVL) and asparagine 485. Position 540 (serine 540) interacts with a 1,2-diacyl-sn-glycero-3-phospho-L-serine. A 1,2-diacyl-sn-glycero-3-phospho-(1D-myo-inositol 4-phosphate) contacts are provided by lysine 706, glutamate 710, and arginine 714. A disordered region spans residues 772–823 (HRTPMVSVPKMKHKPTRQQKKVVKGYSSPEPDIQDSSGSEAQSVKPSTRRKK). Positions 781–794 (KMKHKPTRQQKKVV) are enriched in basic residues. The segment covering 805–817 (QDSSGSEAQSVKP) has biased composition (polar residues). 4 positions are modified to phosphoserine: serine 807, serine 808, serine 810, and serine 814. The helical transmembrane segment at 871-888 (YFVIFLLILLQVIINFIF) threads the bilayer.

It belongs to the OSBP family. In terms of assembly, interacts with SPAG5. Interacts with NUP62. Widely expressed. Most abundant in liver, spleen, kidney, brain and adipose tissue.

The protein localises to the endoplasmic reticulum membrane. It is found in the nucleus membrane. Functionally, lipid transporter involved in lipid countertransport between the endoplasmic reticulum and the plasma membrane: specifically exchanges phosphatidylserine with phosphatidylinositol 4-phosphate (PI4P), delivering phosphatidylserine to the plasma membrane in exchange for PI4P, which is degraded by the SAC1/SACM1L phosphatase in the endoplasmic reticulum. Binds phosphatidylserine and PI4P in a mutually exclusive manner. Binds oxysterol, 25-hydroxycholesterol and cholesterol. The chain is Oxysterol-binding protein-related protein 8 from Mus musculus (Mouse).